Here is a 395-residue protein sequence, read N- to C-terminus: Acid ceramidase (395 aa).

An N-terminal signal peptide occupies residues 1–21; it reads MPGRSCVALVLLAAAVSCAVA. Cys-31 and Cys-340 form a disulfide bridge. Cys-143 acts as the Nucleophile in catalysis. N-linked (GlcNAc...) asparagine glycosylation is found at Asn-173, Asn-195, Asn-259, Asn-286, Asn-342, and Asn-348. Residues Cys-388 and Cys-392 are joined by a disulfide bond.

Belongs to the acid ceramidase family. As to quaternary structure, heterodimer; disulfide-linked. The heterodimer is composed of the disulfide-linked alpha and beta chains produced by autocatalytic cleavage of the precursor. Isoform 2: May interact with NR5A1 in the nucleus; the direct interaction would negatively regulate NR5A1 transcriptional activity. N-glycosylated. In terms of processing, proteolytically cleaved into two chains alpha and beta that remain associated via a disulfide bond. Cleavage gives rise to a conformation change that activates the enzyme. The same catalytic Cys residue mediates the autoproteolytic cleavage and subsequent hydrolysis of lipid substrates. The beta chain may undergo an additional C-terminal processing. Broadly expressed with higher expression in heart.

It is found in the lysosome. Its subcellular location is the secreted. It localises to the nucleus. The protein resides in the cytoplasm. The enzyme catalyses an N-acylsphing-4-enine + H2O = sphing-4-enine + a fatty acid. It catalyses the reaction a beta-D-glucosyl-(1&lt;-&gt;1')-N-acylsphing-4-enine + H2O = beta-D-glucosyl-(1&lt;-&gt;1)-sphing-4-enine + a fatty acid. The catalysed reaction is a globoside Gb3Cer + H2O = a lysoGb3 + a fatty acid. It carries out the reaction a globoside Gb3Cer (d18:1(4E)) + H2O = a lysoGb3(d18:1(4E)) + a fatty acid. The enzyme catalyses N-dodecanoylsphing-4-enine + H2O = dodecanoate + sphing-4-enine. It catalyses the reaction N-tetradecanoylsphing-4-enine + H2O = tetradecanoate + sphing-4-enine. The catalysed reaction is N-hexadecanoylsphing-4-enine + H2O = sphing-4-enine + hexadecanoate. It carries out the reaction N-octadecanoylsphing-4-enine + H2O = sphing-4-enine + octadecanoate. The enzyme catalyses N-dodecanoyl-(4R)-hydroxysphinganine + H2O = (4R)-hydroxysphinganine + dodecanoate. It catalyses the reaction N-(dodecanoyl)-sphinganine + H2O = dodecanoate + sphinganine. The catalysed reaction is N-(acetyl)-sphing-4-enine + H2O = sphing-4-enine + acetate. It carries out the reaction N-(hexanoyl)sphing-4-enine + H2O = hexanoate + sphing-4-enine. The enzyme catalyses N-octanoylsphing-4-enine + H2O = octanoate + sphing-4-enine. It catalyses the reaction N-(9Z-octadecenoyl)-sphing-4-enine + H2O = sphing-4-enine + (9Z)-octadecenoate. The catalysed reaction is N-dodecanoylethanolamine + H2O = dodecanoate + ethanolamine. Its pathway is lipid metabolism; sphingolipid metabolism. Its activity is regulated as follows. Activated by Ca(2+), Mg(2+) and Na(+) cations. Inhibited by Zn(2+). Phosphatidylserine and phosphatidic acid stimulate while cardiolipin, phosphatidylcholine, lysophosphatidylcholine, phosphatidylethanolamine, phosphatidylinositol and sphingomyelin inhibit the reverse ceramide synthase activity. Phosphatidic acid, phosphatidylinositol and C16-ceramide inhibit the ceramidase/hydrolase activity. Lysosomal ceramidase that hydrolyzes sphingolipid ceramides into sphingosine and free fatty acids at acidic pH. Ceramides, sphingosine, and its phosphorylated form sphingosine-1-phosphate are bioactive lipids that mediate cellular signaling pathways regulating several biological processes including cell proliferation, apoptosis and differentiation. Has a higher catalytic efficiency towards C12-ceramides versus other ceramides. Also catalyzes the reverse reaction allowing the synthesis of ceramides from fatty acids and sphingosine. For the reverse synthetic reaction, the natural sphingosine D-erythro isomer is more efficiently utilized as a substrate compared to D-erythro-dihydrosphingosine and D-erythro-phytosphingosine, while the fatty acids with chain lengths of 12 or 14 carbons are the most efficiently used. Also has an N-acylethanolamine hydrolase activity. By regulating the levels of ceramides, sphingosine and sphingosine-1-phosphate in the epidermis, mediates the calcium-induced differentiation of epidermal keratinocytes. Also indirectly regulates tumor necrosis factor/TNF-induced apoptosis. By regulating the intracellular balance between ceramides and sphingosine, in adrenocortical cells, probably also acts as a regulator of steroidogenesis. Functionally, may directly regulate steroidogenesis by binding the nuclear receptor NR5A1 and negatively regulating its transcriptional activity. This Homo sapiens (Human) protein is Acid ceramidase.